The following is a 710-amino-acid chain: uncharacterized protein (710 aa).

The tract at residues 1-40 is disordered; that stretch reads MSESDGAFKSPSLPPSHHAPAPMSPEKIRAPAEQMDGPVE. The span at 15 to 25 shows a compositional bias: low complexity; that stretch reads PSHHAPAPMSP. The 58-residue stretch at 108–165 folds into the FHA domain; that stretch reads VVIGRIKPGCDLLMEHPSISRYHCILQYGNDKMSKTGKGWHIFELGSTHGSRMNKKRL. Coiled-coil stretches lie at residues 206–240, 409–440, and 471–502; these read TEMK…KEEE, ETDT…LSAG, and AKTK…KIAK. The disordered stretch occupies residues 230 to 250; that stretch reads IDDEKREKEEEGCGWGMDYGE. Disordered stretches follow at residues 535–560, 591–619, and 671–710; these read EIDQ…APTS, KNSL…AFGS, and EDYG…AGRY. A compositionally biased stretch (polar residues) spans 538–560; it reads QTPSQGPGPSTSATLPATVAPTS. Positions 613-661 form a coiled coil; it reads QKEAFGSKVQKRVAQWEEELEAEKEELAKKQKLEAEEEAKKKVQRVRRR.

This is an uncharacterized protein from Caenorhabditis elegans.